The following is a 78-amino-acid chain: Protein Class8-like (78 aa).

Residues 1–19 form the signal peptide; it reads MRTLVVLLIGAVLLCSANA. A propeptide spanning residues 20-36 is cleaved from the precursor; the sequence is FLDELLAESVNDMTDKR. The ShKT domain maps to 38–78; that stretch reads CFDKYKSNICGGVISPAHCVRRSGRMAKFAKENCAHFCGFC. Disulfide bonds link Cys38-Cys78, Cys47-Cys71, and Cys56-Cys75.

As to expression, expressed in ganglion neurons residing in the mesoglea (observed in both planulae and primary polyps). Not expressed in nematocytes.

Functionally, probable neuropeptide. The polypeptide is Protein Class8-like (Nematostella vectensis (Starlet sea anemone)).